The chain runs to 155 residues: Small ribosomal subunit protein bS16 (155 aa).

The tract at residues Ala-113–Glu-155 is disordered. Positions Ala-136–Ala-146 are enriched in acidic residues.

This sequence belongs to the bacterial ribosomal protein bS16 family.

This is Small ribosomal subunit protein bS16 from Mycobacteroides abscessus (strain ATCC 19977 / DSM 44196 / CCUG 20993 / CIP 104536 / JCM 13569 / NCTC 13031 / TMC 1543 / L948) (Mycobacterium abscessus).